A 149-amino-acid polypeptide reads, in one-letter code: Nucleoside diphosphate kinase (149 aa).

Lysine 9, phenylalanine 57, arginine 85, threonine 91, arginine 102, and asparagine 112 together coordinate ATP. The active-site Pros-phosphohistidine intermediate is histidine 115.

The protein belongs to the NDK family. As to quaternary structure, homotetramer. Mg(2+) serves as cofactor.

It is found in the cytoplasm. The catalysed reaction is a 2'-deoxyribonucleoside 5'-diphosphate + ATP = a 2'-deoxyribonucleoside 5'-triphosphate + ADP. It catalyses the reaction a ribonucleoside 5'-diphosphate + ATP = a ribonucleoside 5'-triphosphate + ADP. Functionally, major role in the synthesis of nucleoside triphosphates other than ATP. The ATP gamma phosphate is transferred to the NDP beta phosphate via a ping-pong mechanism, using a phosphorylated active-site intermediate. This Desulfitobacterium hafniense (strain DSM 10664 / DCB-2) protein is Nucleoside diphosphate kinase.